A 336-amino-acid chain; its full sequence is Dihydroorotate dehydrogenase (quinone) (336 aa).

Residues 62-66 and Thr-86 each bind FMN; that span reads AGLDK. Position 66 (Lys-66) interacts with substrate. Residue 111–115 participates in substrate binding; sequence NRMGF. 2 residues coordinate FMN: Asn-139 and Asn-172. Position 172 (Asn-172) interacts with substrate. Ser-175 (nucleophile) is an active-site residue. Asn-177 serves as a coordination point for substrate. Lys-217 and Thr-245 together coordinate FMN. 246-247 contacts substrate; that stretch reads NT. FMN is bound by residues Gly-268, Gly-297, and 318-319; that span reads YS.

The protein belongs to the dihydroorotate dehydrogenase family. Type 2 subfamily. In terms of assembly, monomer. FMN serves as cofactor.

It localises to the cell membrane. The enzyme catalyses (S)-dihydroorotate + a quinone = orotate + a quinol. It functions in the pathway pyrimidine metabolism; UMP biosynthesis via de novo pathway; orotate from (S)-dihydroorotate (quinone route): step 1/1. Functionally, catalyzes the conversion of dihydroorotate to orotate with quinone as electron acceptor. In Salmonella choleraesuis (strain SC-B67), this protein is Dihydroorotate dehydrogenase (quinone).